The sequence spans 585 residues: Protein DENND6B (585 aa).

Positions Glu43 to Val214 constitute a uDENN domain. The 128-residue stretch at Val246–Lys373 folds into the cDENN domain. In terms of domain architecture, dDENN spans Leu375 to Arg499.

This sequence belongs to the DENND6 family.

It localises to the recycling endosome. Its subcellular location is the cytoplasm. Guanine nucleotide exchange factor (GEF) for RAB14. Also has some, lesser GEF activity towards RAB35. This Homo sapiens (Human) protein is Protein DENND6B (DENND6B).